A 226-amino-acid chain; its full sequence is Peroxiredoxin-like 2C (226 aa).

The tract at residues 1–24 is disordered; that stretch reads MAAPVTRQVSGCAGRVPSPAGSVT.

The protein belongs to the peroxiredoxin-like PRXL2 family. PRXL2C subfamily.

Functionally, may positively regulate ERK1/2 signaling and AKT1 activation leading to HIF1A up-regulation with an increased expression of glycolysis genes and enhanced glycolysis. This Mus musculus (Mouse) protein is Peroxiredoxin-like 2C (Prxl2c).